Here is a 466-residue protein sequence, read N- to C-terminus: Coproporphyrinogen III oxidase (466 aa).

FAD contacts are provided by residues 9–14, 34–35, Lys42, 56–59, Val254, and 446–448; these read GAGITG, EA, GPES, and VGL.

The protein belongs to the protoporphyrinogen/coproporphyrinogen oxidase family. Coproporphyrinogen III oxidase subfamily. FAD serves as cofactor.

It is found in the cytoplasm. The catalysed reaction is coproporphyrinogen III + 3 O2 = coproporphyrin III + 3 H2O2. Its pathway is porphyrin-containing compound metabolism; protoheme biosynthesis. With respect to regulation, the generation of protoporphyrin IX, but not coproporphyrin III, is stimulated by heme-bound HemQ. This stimulatory effect is mediated by superoxide. Inhibited by acifluorfen analogs. Functionally, involved in coproporphyrin-dependent heme b biosynthesis. Catalyzes the oxidation of coproporphyrinogen III to coproporphyrin III. Can also oxidize protoporphyrinogen IX. The protein is Coproporphyrinogen III oxidase of Staphylococcus aureus (strain NCTC 8325 / PS 47).